Consider the following 504-residue polypeptide: Cytochrome P450 3A11 (504 aa).

Cys443 serves as a coordination point for heme.

Belongs to the cytochrome P450 family. It depends on heme as a cofactor. In terms of tissue distribution, highly expressed in liver.

The protein resides in the endoplasmic reticulum membrane. Its subcellular location is the microsome membrane. It catalyses the reaction an organic molecule + reduced [NADPH--hemoprotein reductase] + O2 = an alcohol + oxidized [NADPH--hemoprotein reductase] + H2O + H(+). Its function is as follows. Catalyzes erythromycin N-demethylation, nifedipine oxidation and testosterone 6 beta-hydroxylation. In Mus musculus (Mouse), this protein is Cytochrome P450 3A11 (Cyp3a11).